A 206-amino-acid polypeptide reads, in one-letter code: Small ribosomal subunit protein uS5 (206 aa).

Over residues 1–15 (MTDTPTKQEIQSKND) the composition is skewed to polar residues. The interval 1-50 (MTDTPTKQEIQSKNDNVPGATPVEQKKNNRNDRKRNRRGDSKNLERDSDW) is disordered. Residues 38 to 50 (RGDSKNLERDSDW) show a composition bias toward basic and acidic residues. The 64-residue stretch at 50–113 (WQERVVQIRR…SDGKKNLVRV (64 aa)) folds into the S5 DRBM domain.

It belongs to the universal ribosomal protein uS5 family. In terms of assembly, part of the 30S ribosomal subunit. Contacts proteins S4 and S8.

Functionally, with S4 and S12 plays an important role in translational accuracy. In terms of biological role, located at the back of the 30S subunit body where it stabilizes the conformation of the head with respect to the body. This is Small ribosomal subunit protein uS5 from Prochlorococcus marinus (strain MIT 9301).